The sequence spans 254 residues: 4-hydroxy-tetrahydrodipicolinate reductase (254 aa).

An NAD(+)-binding site is contributed by 7–12 (GASGRI). An NADP(+)-binding site is contributed by arginine 35. Residues 91–93 (GTT) and 115–118 (AHNM) each bind NAD(+). Histidine 147 (proton donor/acceptor) is an active-site residue. Residue histidine 148 coordinates (S)-2,3,4,5-tetrahydrodipicolinate. Catalysis depends on lysine 151, which acts as the Proton donor. 157–158 (GT) is a (S)-2,3,4,5-tetrahydrodipicolinate binding site.

It belongs to the DapB family.

It is found in the cytoplasm. It carries out the reaction (S)-2,3,4,5-tetrahydrodipicolinate + NAD(+) + H2O = (2S,4S)-4-hydroxy-2,3,4,5-tetrahydrodipicolinate + NADH + H(+). It catalyses the reaction (S)-2,3,4,5-tetrahydrodipicolinate + NADP(+) + H2O = (2S,4S)-4-hydroxy-2,3,4,5-tetrahydrodipicolinate + NADPH + H(+). It functions in the pathway amino-acid biosynthesis; L-lysine biosynthesis via DAP pathway; (S)-tetrahydrodipicolinate from L-aspartate: step 4/4. Catalyzes the conversion of 4-hydroxy-tetrahydrodipicolinate (HTPA) to tetrahydrodipicolinate. This chain is 4-hydroxy-tetrahydrodipicolinate reductase, found in Helicobacter acinonychis (strain Sheeba).